Consider the following 401-residue polypeptide: Probable peptidoglycan glycosyltransferase FtsW (401 aa).

Residues 1–26 lie on the Cytoplasmic side of the membrane; that stretch reads MAEVLRWLRLDLGQSGGLAWERLDWR. The chain crosses the membrane as a helical span at residues 27 to 47; it reads LALTVLALAGLGLVMVGSASV. The Periplasmic portion of the chain corresponds to 48 to 65; it reads SIAEGATGDPLHYLYRQA. A helical transmembrane segment spans residues 66-86; that stretch reads VFLAVALMAAVACLHLSLDQF. At 87–88 the chain is on the cytoplasmic side; the sequence is YR. Residues 89-109 form a helical membrane-spanning segment; that stretch reads GGPVLLVLGFFLLLVVLIPGV. Residues 110–118 are Periplasmic-facing; that stretch reads GREVNGATR. A helical transmembrane segment spans residues 119-139; the sequence is WIPLGLINLQVAEVARVCFII. Over 140 to 154 the chain is Cytoplasmic; sequence YLAGYCVRRHAELPN. Residues 155-175 traverse the membrane as a helical segment; the sequence is TSSAFAVPLAVFSLAAVLLLA. Over 176-180 the chain is Periplasmic; that stretch reads QPDFG. A helical transmembrane segment spans residues 181-201; that stretch reads TALVLMATALGLLFLAGASLW. Residue arginine 202 is a topological domain, cytoplasmic. A helical membrane pass occupies residues 203-223; it reads IGVLGLLLAGAAWLLIVGSPY. Residues 224–278 are Periplasmic-facing; it reads RWQRLTTFTDPWADPFNAGFQLTQSLIAIGRGEWFGVGLGASVQKLFYLPEAHTD. A helical transmembrane segment spans residues 279–299; it reads FLFAVLAEELGLLGVVVVVAL. Residues 300 to 322 are Cytoplasmic-facing; it reads FTYLAWRGMQIGLASLRADRPFG. The chain crosses the membrane as a helical span at residues 323–343; the sequence is AYLAWGLTISIGLQAFINMAV. Residues 344 to 354 lie on the Periplasmic side of the membrane; the sequence is TMGLLPTKGLT. Residues 355-375 form a helical membrane-spanning segment; the sequence is LPLMSYGGSSLIMTGIALALL. Residues 376–401 lie on the Cytoplasmic side of the membrane; the sequence is LRVDYEARLAAQQPRPRKRPSGRVRP.

Belongs to the SEDS family. FtsW subfamily.

It localises to the cell inner membrane. The enzyme catalyses [GlcNAc-(1-&gt;4)-Mur2Ac(oyl-L-Ala-gamma-D-Glu-L-Lys-D-Ala-D-Ala)](n)-di-trans,octa-cis-undecaprenyl diphosphate + beta-D-GlcNAc-(1-&gt;4)-Mur2Ac(oyl-L-Ala-gamma-D-Glu-L-Lys-D-Ala-D-Ala)-di-trans,octa-cis-undecaprenyl diphosphate = [GlcNAc-(1-&gt;4)-Mur2Ac(oyl-L-Ala-gamma-D-Glu-L-Lys-D-Ala-D-Ala)](n+1)-di-trans,octa-cis-undecaprenyl diphosphate + di-trans,octa-cis-undecaprenyl diphosphate + H(+). Its pathway is cell wall biogenesis; peptidoglycan biosynthesis. In terms of biological role, peptidoglycan polymerase that is essential for cell division. This Alkalilimnicola ehrlichii (strain ATCC BAA-1101 / DSM 17681 / MLHE-1) protein is Probable peptidoglycan glycosyltransferase FtsW.